We begin with the raw amino-acid sequence, 391 residues long: Formate-dependent phosphoribosylglycinamide formyltransferase (391 aa).

N(1)-(5-phospho-beta-D-ribosyl)glycinamide-binding positions include 18 to 19 (EL) and Glu-78. ATP-binding positions include Arg-110, Lys-151, 156 to 161 (SSGKGQ), 191 to 194 (EEFI), and Glu-199. The ATP-grasp domain occupies 115–305 (ELAHEELGIR…EFELHLRAIL (191 aa)). Residues Glu-264 and Glu-276 each coordinate Mg(2+). N(1)-(5-phospho-beta-D-ribosyl)glycinamide contacts are provided by residues Asp-283, Lys-353, and 360-361 (RR).

Belongs to the PurK/PurT family. Homodimer.

The catalysed reaction is N(1)-(5-phospho-beta-D-ribosyl)glycinamide + formate + ATP = N(2)-formyl-N(1)-(5-phospho-beta-D-ribosyl)glycinamide + ADP + phosphate + H(+). Its pathway is purine metabolism; IMP biosynthesis via de novo pathway; N(2)-formyl-N(1)-(5-phospho-D-ribosyl)glycinamide from N(1)-(5-phospho-D-ribosyl)glycinamide (formate route): step 1/1. In terms of biological role, involved in the de novo purine biosynthesis. Catalyzes the transfer of formate to 5-phospho-ribosyl-glycinamide (GAR), producing 5-phospho-ribosyl-N-formylglycinamide (FGAR). Formate is provided by PurU via hydrolysis of 10-formyl-tetrahydrofolate. This Nostoc sp. (strain PCC 7120 / SAG 25.82 / UTEX 2576) protein is Formate-dependent phosphoribosylglycinamide formyltransferase.